The primary structure comprises 1026 residues: mRNA transport homolog 4 (1026 aa).

A Helicase ATP-binding domain is found at 134–290 (ILCIDNNQSV…WVASIKQQPV (157 aa)). Residue 147–154 (AHTSAGKT) coordinates ATP. The DEIH box signature appears at 238–241 (DEIH). The 205-residue stretch at 360 to 564 (NVLKIIRSVA…NMVLNLMRVE (205 aa)) folds into the Helicase C-terminal domain.

The protein belongs to the helicase family. SKI2 subfamily.

It localises to the nucleus. The protein is mRNA transport homolog 4 (mtr-4) of Caenorhabditis elegans.